Reading from the N-terminus, the 530-residue chain is Copine-D (530 aa).

C2 domains follow at residues 1-122 (MNPI…RMKM) and 130-248 (LSGS…EFEI). Ca(2+)-binding residues include Asp25, Asp31, Asp85, Asp87, and Asp100. A VWFA domain is found at 289–507 (NLMVAIDCTA…ALAHETLKEI (219 aa)).

It belongs to the copine family. Ca(2+) is required as a cofactor.

The sequence is that of Copine-D (cpnD) from Dictyostelium discoideum (Social amoeba).